The primary structure comprises 200 residues: Kunitz type trypsin inhibitor 111 (200 aa).

Residues 1–24 form the signal peptide; sequence MSTISFTIFILANVWLLVVTTSIA. Disulfide bonds link Cys62–Cys108, Cys160–Cys172, and Cys165–Cys168.

It belongs to the protease inhibitor I3 (leguminous Kunitz-type inhibitor) family. In terms of assembly, interacts with SCP1.

Its subcellular location is the secreted. It localises to the extracellular space. The protein resides in the apoplast. This chain is Kunitz type trypsin inhibitor 111 (KPI111), found in Medicago truncatula (Barrel medic).